The chain runs to 393 residues: tRNA(Met) cytidine acetate ligase (393 aa).

ATP contacts are provided by glycine 81, asparagine 142, and arginine 167.

Belongs to the TmcAL family.

It is found in the cytoplasm. The enzyme catalyses cytidine(34) in elongator tRNA(Met) + acetate + ATP = N(4)-acetylcytidine(34) in elongator tRNA(Met) + AMP + diphosphate. Functionally, catalyzes the formation of N(4)-acetylcytidine (ac(4)C) at the wobble position of elongator tRNA(Met), using acetate and ATP as substrates. First activates an acetate ion to form acetyladenylate (Ac-AMP) and then transfers the acetyl group to tRNA to form ac(4)C34. This Bacillus thuringiensis subsp. konkukian (strain 97-27) protein is tRNA(Met) cytidine acetate ligase.